Consider the following 256-residue polypeptide: Hemin import ATP-binding protein HmuV (256 aa).

The region spanning 2–238 (ISAQNLVYSL…QALTMLYGAD (237 aa)) is the ABC transporter domain. 34–41 (GPNGAGKS) contributes to the ATP binding site.

Belongs to the ABC transporter superfamily. Heme (hemin) importer (TC 3.A.1.14.5) family. The complex is composed of two ATP-binding proteins (HmuV), two transmembrane proteins (HmuU) and a solute-binding protein (HmuT).

The protein resides in the cell inner membrane. Its function is as follows. Part of the ABC transporter complex HmuTUV involved in hemin import. Responsible for energy coupling to the transport system. The chain is Hemin import ATP-binding protein HmuV from Escherichia coli O6:K15:H31 (strain 536 / UPEC).